A 150-amino-acid polypeptide reads, in one-letter code: Regulatory protein RecX (150 aa).

It belongs to the RecX family.

It localises to the cytoplasm. Functionally, modulates RecA activity. This Ectopseudomonas mendocina (strain ymp) (Pseudomonas mendocina) protein is Regulatory protein RecX.